The primary structure comprises 121 residues: Large ribosomal subunit protein bL12 (121 aa).

The protein belongs to the bacterial ribosomal protein bL12 family. Homodimer. Part of the ribosomal stalk of the 50S ribosomal subunit. Forms a multimeric L10(L12)X complex, where L10 forms an elongated spine to which 2 to 4 L12 dimers bind in a sequential fashion. Binds GTP-bound translation factors.

In terms of biological role, forms part of the ribosomal stalk which helps the ribosome interact with GTP-bound translation factors. Is thus essential for accurate translation. In Pseudomonas fluorescens (strain Pf0-1), this protein is Large ribosomal subunit protein bL12.